We begin with the raw amino-acid sequence, 283 residues long: Pantothenate synthetase (283 aa).

30–37 (MGYFHDGH) serves as a coordination point for ATP. His37 acts as the Proton donor in catalysis. Residue Gln61 participates in (R)-pantoate binding. Gln61 is a beta-alanine binding site. 147–150 (GSKD) contributes to the ATP binding site. Position 153 (Gln153) interacts with (R)-pantoate. ATP-binding positions include Val176 and 184–187 (MSSR).

Belongs to the pantothenate synthetase family. As to quaternary structure, homodimer.

It localises to the cytoplasm. It catalyses the reaction (R)-pantoate + beta-alanine + ATP = (R)-pantothenate + AMP + diphosphate + H(+). It functions in the pathway cofactor biosynthesis; (R)-pantothenate biosynthesis; (R)-pantothenate from (R)-pantoate and beta-alanine: step 1/1. Its function is as follows. Catalyzes the condensation of pantoate with beta-alanine in an ATP-dependent reaction via a pantoyl-adenylate intermediate. This Desulforapulum autotrophicum (strain ATCC 43914 / DSM 3382 / VKM B-1955 / HRM2) (Desulfobacterium autotrophicum) protein is Pantothenate synthetase.